Here is a 505-residue protein sequence, read N- to C-terminus: MATIRADEISNIIRERIEQYNREVKIVNTGTVLQVGDGIARIYGLDEVMAGELVEFEEGTIGIALNLESKNVGVVLMGDGLLIQEGSSVKATGRIAQIPVSEAYLGRVINALAKPIDGRGEIYSSESRLIESPAPGIISRRSVYEPLQTGLIAIDAMIPIGRGQRELIIGDRQTGKTAVATDTILNQQGNNVICVYVAIGQKASSVAQVVNALQERGAMEYTIVVAEAADSPATLQYLAPYTGAALAEYFMYRERHTLIIYDDPSKQAQAYRQMSLLLRRPPGREAYPGDVFYLHSRLLERAAKLSSRLGEGSMTALPIVETQSGDVSAYIPTNVISITDGQIFLSADLFNAGIRPAINVGISVSRVGSAAQIKAMKQVAGKLKLELAQFAELEAFAQFSSDLDKATQNQLARGQRLRELLKQSQAKPLTVAEQILTIYTGTNGYLDSFEIAQVRKFLDELRDYVKTRKPQFEEIISSTKIFTEEAQALLKDAIQEQKELFLVQE.

Residue 170-177 (GDRQTGKT) coordinates ATP.

It belongs to the ATPase alpha/beta chains family. In terms of assembly, F-type ATPases have 2 components, CF(1) - the catalytic core - and CF(0) - the membrane proton channel. CF(1) has five subunits: alpha(3), beta(3), gamma(1), delta(1), epsilon(1). CF(0) has four main subunits: a, b, b' and c.

It is found in the plastid. The protein resides in the chloroplast thylakoid membrane. The catalysed reaction is ATP + H2O + 4 H(+)(in) = ADP + phosphate + 5 H(+)(out). Its function is as follows. Produces ATP from ADP in the presence of a proton gradient across the membrane. The alpha chain is a regulatory subunit. This Oenothera biennis (German evening primrose) protein is ATP synthase subunit alpha, chloroplastic.